A 392-amino-acid polypeptide reads, in one-letter code: O-phospho-L-seryl-tRNA:Cys-tRNA synthase 1 (392 aa).

Pyridoxal 5'-phosphate-binding positions include 85-86 (AR), N190, and 213-215 (SGH). Position 216 is an N6-(pyridoxal phosphate)lysine (K216).

This sequence belongs to the SepCysS family. As to quaternary structure, homodimer. Interacts with SepRS. Pyridoxal 5'-phosphate is required as a cofactor.

It carries out the reaction O-phospho-L-seryl-tRNA(Cys) + hydrogen sulfide + H(+) = L-cysteinyl-tRNA(Cys) + phosphate. Its function is as follows. Converts O-phospho-L-seryl-tRNA(Cys) (Sep-tRNA(Cys)) to L-cysteinyl-tRNA(Cys) (Cys-tRNA(Cys)). In Methanoregula boonei (strain DSM 21154 / JCM 14090 / 6A8), this protein is O-phospho-L-seryl-tRNA:Cys-tRNA synthase 1.